The primary structure comprises 449 residues: MPKATIIGLGRSGIAAARVLKGDNWEVTLSDRSNSPNLQQTQGQLQQEGITVKLGDSFTLNPEDLPNLIVVSPGVPWDIPVLVEARDQGIDTIGELELAWRYLNGCSWVGITGTNGKTTTTALIAAIFKAAGLNAPACGNIGYAACELALTQQSYDWIIAEISSYQIESSATLSPKIGIWTTFTPDHLERHKTLDNYYQIKASLLSRCRRQIFNGDDPYLHNIGLSQWKDSYWTSVKGKEALLCDPSKGIYLQDNWIVAFGELIAPINLFKMVGEHNQQNLLMAVGAARLADINKDAIAEAMATFSGVPHRLELIRTIAGVDYINDSKATNYDAAQVGLSSVEAPVILIAGGQAKKGDDTEWIKLIKAKVATVLLIGEAASTFAQRLQESDYYAYEIVETMENAVERSASLATDKGVKIVLLSPACASFDQYQSFEHRGDHFRELCLQL.

113–119 (GTNGKTT) is an ATP binding site.

Belongs to the MurCDEF family.

The protein resides in the cytoplasm. It carries out the reaction UDP-N-acetyl-alpha-D-muramoyl-L-alanine + D-glutamate + ATP = UDP-N-acetyl-alpha-D-muramoyl-L-alanyl-D-glutamate + ADP + phosphate + H(+). It functions in the pathway cell wall biogenesis; peptidoglycan biosynthesis. In terms of biological role, cell wall formation. Catalyzes the addition of glutamate to the nucleotide precursor UDP-N-acetylmuramoyl-L-alanine (UMA). The polypeptide is UDP-N-acetylmuramoylalanine--D-glutamate ligase (Gloeothece citriformis (strain PCC 7424) (Cyanothece sp. (strain PCC 7424))).